The sequence spans 209 residues: Uracil phosphoribosyltransferase (209 aa).

5-phospho-alpha-D-ribose 1-diphosphate-binding positions include arginine 77, arginine 102, and 129 to 137 (DPMLATGSS). Uracil contacts are provided by residues isoleucine 192 and 197–199 (GDA). Aspartate 198 serves as a coordination point for 5-phospho-alpha-D-ribose 1-diphosphate.

It belongs to the UPRTase family. It depends on Mg(2+) as a cofactor.

It catalyses the reaction UMP + diphosphate = 5-phospho-alpha-D-ribose 1-diphosphate + uracil. Its pathway is pyrimidine metabolism; UMP biosynthesis via salvage pathway; UMP from uracil: step 1/1. With respect to regulation, allosterically activated by GTP. Its function is as follows. Catalyzes the conversion of uracil and 5-phospho-alpha-D-ribose 1-diphosphate (PRPP) to UMP and diphosphate. The sequence is that of Uracil phosphoribosyltransferase from Metamycoplasma hominis (Mycoplasma hominis).